Here is a 387-residue protein sequence, read N- to C-terminus: Protein NDRG3 (387 aa).

Residues 329-387 are disordered; it reads PSASMTRLVRSRTHSASSSGSMEMPRSRSHTSNAQLQSTSNNSLSNQIQETPHTIELSC. The segment covering 359–377 has biased composition (low complexity); sequence TSNAQLQSTSNNSLSNQIQ.

It belongs to the NDRG family.

The protein is Protein NDRG3 of Xenopus tropicalis (Western clawed frog).